A 450-amino-acid chain; its full sequence is Serine--tRNA ligase, cytoplasmic (450 aa).

An L-serine-binding site is contributed by Thr238–Glu240. ATP-binding positions include Arg271–Glu273 and Val287. Residue Glu294 participates in L-serine binding. Glu358–Ser361 serves as a coordination point for ATP. Thr396 is an L-serine binding site.

It belongs to the class-II aminoacyl-tRNA synthetase family. Type-1 seryl-tRNA synthetase subfamily. Homodimer. The tRNA molecule binds across the dimer.

The protein localises to the cytoplasm. Its subcellular location is the cytosol. The catalysed reaction is tRNA(Ser) + L-serine + ATP = L-seryl-tRNA(Ser) + AMP + diphosphate + H(+). Catalyzes the attachment of serine to tRNA(Ser) in a two-step reaction: serine is first activated by ATP to form Ser-AMP and then transferred to the acceptor end of tRNA(Ser). This Schizosaccharomyces pombe (strain 972 / ATCC 24843) (Fission yeast) protein is Serine--tRNA ligase, cytoplasmic.